A 428-amino-acid polypeptide reads, in one-letter code: AP-1 complex subunit mu-2 (428 aa).

Residues 170–426 form the MHD domain; that stretch reads KNEVFLDVIE…ITMAGEYELR (257 aa).

It belongs to the adaptor complexes medium subunit family. As to quaternary structure, adaptor protein complex 1 (AP-1) is a heterotetramer composed of two large adaptins (gamma-type subunit and beta-type subunit), a medium adaptin (mu-type subunit) and a small adaptin (sigma-type subunit). In terms of tissue distribution, ubiquitous.

The protein localises to the golgi apparatus. The protein resides in the trans-Golgi network membrane. It is found in the early endosome membrane. Its subcellular location is the cytoplasmic vesicle. It localises to the clathrin-coated vesicle membrane. In terms of biological role, subunit of clathrin-associated adaptor protein complex 1 that plays a role in protein sorting at the trans-Golgi network and early endosomes (TGN/EE). The AP complexes mediate the recruitment of clathrin to membranes and the recognition of sorting signals within the cytosolic tails of transmembrane cargo molecules. Required for KNOLLE localization at the cell plate to mediate cytokinesis. Functions redundantly with AP1M1 in multiple post-Golgi trafficking pathways leading from the TGN to the vacuole, the plasma membrane, and the cell-division plane. This chain is AP-1 complex subunit mu-2 (AP1M2), found in Arabidopsis thaliana (Mouse-ear cress).